A 263-amino-acid polypeptide reads, in one-letter code: MLAIVDVGNTNIKFTLYVDGEFSESWYISTYHERTASELYAILRVLASQANINIHHLVGAAVSSVFPAVNGSITEMFKSFFNIVPVFITSAHASLLGINICLAQNTIGSDRLADIVAARTLYPDRDLLVIDMGTITVFNLVNKNGDLYGQVLSPGLACLVKSVRLCTAALPQVCVNKPTTKVISDATASSLESGLYWGYLSMVEGVIQRILKEESGKSLQTVATGGASNFFRDTTHVLSIDKLLTTKGILQIYRKLIENEEGR.

6–13 is an ATP binding site; the sequence is DVGNTNIK. A substrate-binding site is contributed by 108 to 111; the sequence is GSDR. Aspartate 110 acts as the Proton acceptor in catalysis. K(+) is bound at residue aspartate 131. Residue threonine 134 coordinates ATP. Threonine 187 is a binding site for substrate.

The protein belongs to the type III pantothenate kinase family. Homodimer. Requires NH4(+) as cofactor. It depends on K(+) as a cofactor.

The protein localises to the cytoplasm. It catalyses the reaction (R)-pantothenate + ATP = (R)-4'-phosphopantothenate + ADP + H(+). Its pathway is cofactor biosynthesis; coenzyme A biosynthesis; CoA from (R)-pantothenate: step 1/5. Its function is as follows. Catalyzes the phosphorylation of pantothenate (Pan), the first step in CoA biosynthesis. In Anaplasma phagocytophilum (strain HZ), this protein is Type III pantothenate kinase.